A 246-amino-acid chain; its full sequence is MRLEGKVCLITGAASGIGKATTLLFAQEGATVIAGDISKENLDSLVKEAEGLPGKVDPYVLNVTDRDQIKEVVEKVVQKYGRIDVLVNNAGITRDALLVRMKEEDWDAVINVNLKGVFNVTQMVVPYMIKQRNGSIVNVSSVVGIYGNPGQTNYAASKAGVIGMTKTWAKELAGRNIRVNAVAPGFIETPMTEKLPEKARETALSRIPLGRFGKPEEVAQVILFLASDESSYVTGQVIGIDGGLVI.

Residues 62 to 63 (NV) and N89 each bind NADP(+). Position 141 (S141) interacts with substrate. The Proton acceptor role is filled by Y154. NADP(+)-binding positions include 154–158 (YAASK) and I187.

Belongs to the short-chain dehydrogenases/reductases (SDR) family. Homotetramer.

The catalysed reaction is a (3R)-hydroxyacyl-[ACP] + NADP(+) = a 3-oxoacyl-[ACP] + NADPH + H(+). It functions in the pathway lipid metabolism; fatty acid biosynthesis. In terms of biological role, catalyzes the NADPH-dependent reduction of beta-ketoacyl-ACP substrates to beta-hydroxyacyl-ACP products, the first reductive step in the elongation cycle of fatty acid biosynthesis. The polypeptide is 3-oxoacyl-[acyl-carrier-protein] reductase FabG (fabG) (Thermotoga maritima (strain ATCC 43589 / DSM 3109 / JCM 10099 / NBRC 100826 / MSB8)).